The chain runs to 70 residues: Large ribosomal subunit protein eL43 (70 aa).

Zn(2+)-binding residues include cysteine 36, cysteine 39, cysteine 55, and cysteine 58. Residues 36-58 (CPVCKTTGKVVRIASGVWYCKKC) form a C4-type zinc finger.

It belongs to the eukaryotic ribosomal protein eL43 family. Putative zinc-binding subfamily. Part of the 50S ribosomal subunit. Zn(2+) is required as a cofactor.

Its function is as follows. Binds to the 23S rRNA. The chain is Large ribosomal subunit protein eL43 from Sulfurisphaera tokodaii (strain DSM 16993 / JCM 10545 / NBRC 100140 / 7) (Sulfolobus tokodaii).